The primary structure comprises 567 residues: Geranylgeranyl transferase type-2 subunit alpha (567 aa).

6 PFTA repeats span residues 44 to 78 (LDES…QLET), 88 to 122 (LVKA…RLPE), 124 to 158 (NWAR…QAAV), 159 to 193 (APAE…QLHP), 207 to 241 (VLLR…RAEP), and 363 to 397 (VLQS…ALDP). Phosphoserine is present on Ser-98. LRR repeat units follow at residues 442–463 (DVRV…EQLL), 464–486 (LVTH…AALR), 487–508 (CLEV…ANLP), 509–530 (RLRE…QTLA), and 534–555 (RLVF…RERL).

This sequence belongs to the protein prenyltransferase subunit alpha family. Heterotrimer composed of RABGGTA, RABGGTB and CHM; within this trimer, RABGGTA and RABGGTB form the catalytic component B, while CHM (component A) mediates peptide substrate binding. The Rab GGTase dimer (RGGT) interacts with CHM (component A) prior to Rab protein binding; the association is stabilized by geranylgeranyl pyrophosphate (GGpp). The CHM:RGGT:Rab complex is destabilized by GGpp. Interacts with non-phosphorylated form of RAB8A; phosphorylation of RAB8A at 'Thr-72' disrupts this interaction.

The enzyme catalyses geranylgeranyl diphosphate + L-cysteinyl-[protein] = S-geranylgeranyl-L-cysteinyl-[protein] + diphosphate. Its activity is regulated as follows. The enzymatic reaction requires the aid of a Rab escort protein (also called component A), such as CHM. Catalyzes the transfer of a geranylgeranyl moiety from geranylgeranyl diphosphate to both cysteines of Rab proteins with the C-terminal sequence -XXCC, -XCXC and -CCXX, such as RAB1A, RAB3A, RAB5A and RAB7A. This is Geranylgeranyl transferase type-2 subunit alpha (Rabggta) from Mus musculus (Mouse).